The sequence spans 578 residues: Synaptic defective enhancer 1 (578 aa).

4 disordered regions span residues 1–62, 173–216, 426–457, and 474–578; these read MGEP…RKET, SEQA…SMDQ, PPLP…VSSA, and LGLH…FSNF. Low complexity predominate over residues 444–455; sequence PAAPVPASVPVS. 2 stretches are compositionally biased toward pro residues: residues 481–491 and 500–542; these read PPPPPPPPPPT and IPPP…PNPN. Over residues 565–578 the composition is skewed to low complexity; that stretch reads NQFPPQQQQSFSNF.

May interact (via C-terminus) with ssup-72; the interaction may prevent ssup-72 binding to RNA polymerase II subunit ama-1. As to expression, expressed in germline, oocytes, epidermis, pharyngeal bulb and neurons.

Its subcellular location is the nucleus. It localises to the nucleus speckle. Acts as a negative regulator of nuclear pre-mRNA 3'-end processing (mRNA polyadenylation). Plays a role in tissue-specific expression of protein isoforms by regulating differential processing of pre-mRNA 3'-end (alternative polyadenylation). In neurons, regulates alternative polyadenylation of specific mRNAs including unc-44 and dlk-1 by interacting with phosphatase ssup-72 and thus preventing ssup-72 dephosphorylation of RNA polymerase II subunit ama-1. Specifically, alters the usage of internal polyadenylation sites (PAS) to promote the production of neuron-specific unc-44 isoform and dlk-1 isoform c, both required for normal synapse and axon development. Conversely, in the epidermis, by inhibiting ssup-72 function, promotes the usage of an internal PAS preventing the production of one of unc-44 isoforms. In neurons, also negatively regulates protein levels of pre-RNA processing protein psf-2. The chain is Synaptic defective enhancer 1 from Caenorhabditis elegans.